The sequence spans 305 residues: Acetylglutamate kinase (305 aa).

Substrate contacts are provided by residues 67–68 (GG), R89, and N190.

It belongs to the acetylglutamate kinase family. ArgB subfamily.

The protein localises to the cytoplasm. The enzyme catalyses N-acetyl-L-glutamate + ATP = N-acetyl-L-glutamyl 5-phosphate + ADP. It participates in amino-acid biosynthesis; L-arginine biosynthesis; N(2)-acetyl-L-ornithine from L-glutamate: step 2/4. Its function is as follows. Catalyzes the ATP-dependent phosphorylation of N-acetyl-L-glutamate. The protein is Acetylglutamate kinase of Bifidobacterium longum subsp. infantis (strain ATCC 15697 / DSM 20088 / JCM 1222 / NCTC 11817 / S12).